The chain runs to 185 residues: Dehydrin ERD14 (185 aa).

Basic and acidic residues-rich tracts occupy residues 1–13 (MAEE…EQEV), 25–45 (VTDR…KPEE), 52–78 (FEQK…HRSD), and 103–134 (KPTT…KPED). Disordered stretches follow at residues 1 to 138 (MAEE…GSAV) and 166 to 185 (EKLP…KDKE). At A2 the chain carries N-acetylalanine. Position 59 is a phosphoserine (S59). A run of 2 repeats spans residues 112–132 (EEEK…HKKP) and 154–174 (PVEK…YHPK). Positions 112–174 (EEEKKGFMEK…KEKLPGYHPK (63 aa)) are 2 X 21 AA repeats, Lys-rich.

This sequence belongs to the plant dehydrin family. In stems, cauline leaves, roots and flowers. Low levels found in maturing seeds. Absent in dry seeds.

Intrinsically disordered protein acting as a chaperone. Prevents heat-induced aggregation and/or inactivation of various substrates. Binds to acidic phospholipid vesicles without affecting membrane fluidity. The protein is Dehydrin ERD14 (ERD14) of Arabidopsis thaliana (Mouse-ear cress).